The sequence spans 236 residues: Orotidine 5'-phosphate decarboxylase (236 aa).

Substrate is bound by residues aspartate 17, lysine 39, aspartate 66 to threonine 75, threonine 125, arginine 186, glutamine 195, glycine 215, and arginine 216. Catalysis depends on lysine 68, which acts as the Proton donor.

The protein belongs to the OMP decarboxylase family. Type 1 subfamily. As to quaternary structure, homodimer.

The enzyme catalyses orotidine 5'-phosphate + H(+) = UMP + CO2. Its pathway is pyrimidine metabolism; UMP biosynthesis via de novo pathway; UMP from orotate: step 2/2. Its function is as follows. Catalyzes the decarboxylation of orotidine 5'-monophosphate (OMP) to uridine 5'-monophosphate (UMP). The sequence is that of Orotidine 5'-phosphate decarboxylase from Buchnera aphidicola subsp. Acyrthosiphon pisum (strain 5A).